A 954-amino-acid chain; its full sequence is Valine--tRNA ligase (954 aa).

The 'HIGH' region signature appears at 48–58; it reads PNVTGSLHMGH. A 'KMSKS' region motif is present at residues 560–564; that stretch reads KMSKS. Residue Lys-563 participates in ATP binding. Residues 883–954 adopt a coiled-coil conformation; the sequence is AGFINKEAEL…QTQYQAIENL (72 aa).

It belongs to the class-I aminoacyl-tRNA synthetase family. ValS type 1 subfamily. Monomer.

It localises to the cytoplasm. It carries out the reaction tRNA(Val) + L-valine + ATP = L-valyl-tRNA(Val) + AMP + diphosphate. Functionally, catalyzes the attachment of valine to tRNA(Val). As ValRS can inadvertently accommodate and process structurally similar amino acids such as threonine, to avoid such errors, it has a 'posttransfer' editing activity that hydrolyzes mischarged Thr-tRNA(Val) in a tRNA-dependent manner. This chain is Valine--tRNA ligase, found in Actinobacillus pleuropneumoniae serotype 3 (strain JL03).